The chain runs to 178 residues: Interleukin-10 (178 aa).

The signal sequence occupies residues 1 to 18 (MHSSALLCCLVLLTGVRA). 2 disulfide bridges follow: Cys30/Cys126 and Cys80/Cys132. Residue Asn134 is glycosylated (N-linked (GlcNAc...) asparagine).

This sequence belongs to the IL-10 family. As to quaternary structure, homodimer. Interacts with IL10RA and IL10RB. As to expression, produced by a variety of cell lines, including T-cells, macrophages, mast cells and other cell types.

The protein resides in the secreted. Functionally, major immune regulatory cytokine that acts on many cells of the immune system where it has profound anti-inflammatory functions, limiting excessive tissue disruption caused by inflammation. Mechanistically, IL10 binds to its heterotetrameric receptor comprising IL10RA and IL10RB leading to JAK1 and STAT2-mediated phosphorylation of STAT3. In turn, STAT3 translocates to the nucleus where it drives expression of anti-inflammatory mediators. Targets antigen-presenting cells (APCs) such as macrophages and monocytes and inhibits their release of pro-inflammatory cytokines including granulocyte-macrophage colony-stimulating factor /GM-CSF, granulocyte colony-stimulating factor/G-CSF, IL-1 alpha, IL-1 beta, IL-6, IL-8 and TNF-alpha. Also interferes with antigen presentation by reducing the expression of MHC-class II and co-stimulatory molecules, thereby inhibiting their ability to induce T cell activation. In addition, controls the inflammatory response of macrophages by reprogramming essential metabolic pathways including mTOR signaling. This is Interleukin-10 (IL10) from Homo sapiens (Human).